Here is a 329-residue protein sequence, read N- to C-terminus: Phosphate acyltransferase (329 aa).

This sequence belongs to the PlsX family. Homodimer. Probably interacts with PlsY.

The protein localises to the cytoplasm. It catalyses the reaction a fatty acyl-[ACP] + phosphate = an acyl phosphate + holo-[ACP]. Its pathway is lipid metabolism; phospholipid metabolism. Its function is as follows. Catalyzes the reversible formation of acyl-phosphate (acyl-PO(4)) from acyl-[acyl-carrier-protein] (acyl-ACP). This enzyme utilizes acyl-ACP as fatty acyl donor, but not acyl-CoA. In Campylobacter lari (strain RM2100 / D67 / ATCC BAA-1060), this protein is Phosphate acyltransferase.